A 385-amino-acid chain; its full sequence is Protein GOLM2 (385 aa).

Residues 1–12 (MVGFGAPRRTGR) lie on the Cytoplasmic side of the membrane. Residues 13 to 33 (LPPFVLVALLAVIGLLAFNYW) form a helical; Signal-anchor for type II membrane protein membrane-spanning segment. Residues 34-385 (SVSARQAALH…YHKDHLNETL (352 aa)) are Lumenal-facing. A coiled-coil region spans residues 44 to 193 (DELLGLQAQV…KEELDKQPQK (150 aa)). The tract at residues 169-385 (LAERKREYEE…YHKDHLNETL (217 aa)) is disordered. Basic and acidic residues-rich tracts occupy residues 170–193 (AERK…QPQK) and 211–220 (EVKEKIEDPS). Residues 265–283 (LPSQSKSLLEKQPSLQPLS) are compositionally biased toward polar residues. Residues 285–299 (TEHEVKKPLPDKKET) are compositionally biased toward basic and acidic residues. The segment covering 356–367 (NGDDGNVEDDDH) has biased composition (acidic residues). Residues 368-385 (DGQADAGEYHKDHLNETL) show a composition bias toward basic and acidic residues.

Belongs to the GOLM family.

The protein resides in the membrane. This chain is Protein GOLM2 (golm2), found in Xenopus laevis (African clawed frog).